Consider the following 179-residue polypeptide: Caveolin-1 (179 aa).

Position 2 is an N-acetylserine (Ser2). Phosphoserine is present on Ser2. The tract at residues 2-95 is required for homooligomerization; sequence SGGKYVDSEG…WKASFTTFTV (94 aa). Residues 2–105 are Cytoplasmic-facing; that stretch reads SGGKYVDSEG…TKYWFYRLLS (104 aa). Lys5 is subject to N6-acetyllysine; alternate. Residue Lys5 forms a Glycyl lysine isopeptide (Lys-Gly) (interchain with G-Cter in ubiquitin); alternate linkage. A Phosphotyrosine modification is found at Tyr6. Phosphoserine is present on Ser9. Residue Tyr14 is modified to Phosphotyrosine; by ABL1. Position 25 is a phosphotyrosine (Tyr25). Residues Lys26 and Lys30 each participate in a glycyl lysine isopeptide (Lys-Gly) (interchain with G-Cter in ubiquitin) cross-link. Ser37 bears the Phosphoserine mark. Residues Lys39, Lys48, and Lys58 each participate in a glycyl lysine isopeptide (Lys-Gly) (interchain with G-Cter in ubiquitin) cross-link. The tract at residues 83–95 is interaction with CAVIN3; the sequence is DGIWKASFTTFTV. Positions 106–126 form an intramembrane region, helical; sequence ALFGIPMALIWGIYFAILSFL. The Cytoplasmic portion of the chain corresponds to 127–179; it reads HIWAVVPCIKSFLIEIQCISRVYSIYVHTFCDPLFEAIGKVFSNIRINMQKEI. Residues 132–143 are interacts with SPRY1, SPRY2, SPRY3 and SPRY4; it reads VPCIKSFLIEIQ. 3 S-palmitoyl cysteine lipidation sites follow: Cys134, Cys144, and Cys157. Positions 150-161 are interacts with SPRY1, SPRY2, and SPRY4; sequence SIYVHTFCDPLF. An interacts with SPRY1, SPRY2, SPRY3 and SPRY4 region spans residues 168 to 179; it reads FSNIRINMQKEI.

This sequence belongs to the caveolin family. Homooligomer. Interacts with GLIPR2. Interacts with NOSTRIN. Interacts with SNAP25 and STX1A. Interacts (via the N-terminus) with DPP4; the interaction is direct. Interacts with CTNNB1, CDH1 and JUP. Interacts with PACSIN2; this interaction induces membrane tubulation. Interacts with SLC7A9. Interacts with BMX and BTK. Interacts with TGFBR1. Interacts with CAVIN3 (via leucine-zipper domain) in a cholesterol-sensitive manner. Interacts with CAVIN1. Interacts with EHD2 in a cholesterol-dependent manner. Forms a ternary complex with UBXN6 and VCP; mediates CAV1 targeting to lysosomes for degradation. Interacts with ABCG1; this interaction regulates ABCG1-mediated cholesterol efflux. Interacts with NEU3; this interaction enhances NEU3 sialidase activity within caveola. Interacts (via C-terminus) with SPRY1, SPRY2 (via C-terminus), SPRY3, and SPRY4. Interacts with IGFBP5; this interaction allows trafficking of IGFBP5 from the plasma membrane to the nucleus. Phosphorylated at Tyr-14 by ABL1 in response to oxidative stress. In terms of processing, ubiquitinated. Undergo monoubiquitination and multi- and/or polyubiquitination. Monoubiquitination of N-terminal lysines promotes integration in a ternary complex with UBXN6 and VCP which promotes oligomeric CAV1 targeting to lysosomes for degradation. Ubiquitinated by ZNRF1; leading to degradation and modulation of the TLR4-mediated immune response.

It is found in the golgi apparatus membrane. It localises to the cell membrane. Its subcellular location is the membrane. The protein resides in the caveola. The protein localises to the membrane raft. In terms of biological role, may act as a scaffolding protein within caveolar membranes. Forms a stable heterooligomeric complex with CAV2 that targets to lipid rafts and drives caveolae formation. Mediates the recruitment of CAVIN proteins (CAVIN1/2/3/4) to the caveolae. Interacts directly with G-protein alpha subunits and can functionally regulate their activity. Involved in the costimulatory signal essential for T-cell receptor (TCR)-mediated T-cell activation. Its binding to DPP4 induces T-cell proliferation and NF-kappa-B activation in a T-cell receptor/CD3-dependent manner. Recruits CTNNB1 to caveolar membranes and may regulate CTNNB1-mediated signaling through the Wnt pathway. Negatively regulates TGFB1-mediated activation of SMAD2/3 by mediating the internalization of TGFBR1 from membrane rafts leading to its subsequent degradation. Binds 20(S)-hydroxycholesterol (20(S)-OHC). The protein is Caveolin-1 (CAV1) of Eulemur macaco macaco (Black lemur).